Here is a 305-residue protein sequence, read N- to C-terminus: MELIFLGTSAGVPTRTRNVTAILLNLQHPTQSGLWLFDCGEGTQHQLLHTAFNPGKLDKIFISHLHGDHLFGLPGLLCSRSMSGIIQPLTIYGPHGIREFVETALRISGSWTDYPLEIVEIGAGEIFDDGLRKVTAYPMEHPLECYGYRIEEHDKPGALNAQALKAAGVPPGPLFQELKAGKTIMLDDGRQINGADYLAVPVPGKALAIFGDTGPCDAALELAKGVDVMVHEATLDMAMEAKANSRGHSSTRQAAALAREAGVGKLIITHVSSRYDDKGCQHLLRECRSIFPATELANDFAVFSI.

The Zn(2+) site is built by histidine 64, histidine 66, aspartate 68, histidine 69, histidine 141, aspartate 212, and histidine 270. The active-site Proton acceptor is aspartate 68.

The protein belongs to the RNase Z family. RNase BN subfamily. Homodimer. The cofactor is Zn(2+).

In terms of biological role, zinc phosphodiesterase, which has both exoribonuclease and endoribonuclease activities. This is Ribonuclease BN from Escherichia coli O45:K1 (strain S88 / ExPEC).